The chain runs to 708 residues: Ion-translocating oxidoreductase complex subunit C (708 aa).

4Fe-4S ferredoxin-type domains are found at residues 369 to 397 and 407 to 436; these read GEPQ…QQLY and KATT…VQYF. Cysteine 377, cysteine 380, cysteine 383, cysteine 387, cysteine 416, cysteine 419, cysteine 422, and cysteine 426 together coordinate [4Fe-4S] cluster. The tract at residues 599-686 is disordered; that stretch reads KARKLEQQQS…EEQVDPRKAA (88 aa).

The protein belongs to the 4Fe4S bacterial-type ferredoxin family. RnfC subfamily. In terms of assembly, the complex is composed of six subunits: RsxA, RsxB, RsxC, RsxD, RsxE and RsxG. [4Fe-4S] cluster is required as a cofactor.

The protein resides in the cell inner membrane. Its function is as follows. Part of a membrane-bound complex that couples electron transfer with translocation of ions across the membrane. Required to maintain the reduced state of SoxR. This Escherichia coli (strain 55989 / EAEC) protein is Ion-translocating oxidoreductase complex subunit C.